The chain runs to 311 residues: D-alanine--D-alanine ligase (311 aa).

The ATP-grasp domain maps to 106 to 301; it reads KLLWRGAELP…FDELCWRILL (196 aa). 132–187 is an ATP binding site; sequence IGSVGLPLMIKPAHEGSSIGMAKVERPEELEAARAEAARYDDLVLAERWIEGGEYT. Mg(2+) is bound by residues Asp255, Glu268, and Asn270.

This sequence belongs to the D-alanine--D-alanine ligase family. Requires Mg(2+) as cofactor. Mn(2+) serves as cofactor.

The protein localises to the cytoplasm. It catalyses the reaction 2 D-alanine + ATP = D-alanyl-D-alanine + ADP + phosphate + H(+). Its pathway is cell wall biogenesis; peptidoglycan biosynthesis. In terms of biological role, cell wall formation. This is D-alanine--D-alanine ligase from Alkalilimnicola ehrlichii (strain ATCC BAA-1101 / DSM 17681 / MLHE-1).